Here is a 72-residue protein sequence, read N- to C-terminus: Conotoxin Gla(2)-TxVI/A (72 aa).

The N-terminal stretch at 1 to 19 (MQKLIILLLVAAVLMSTQA) is a signal peptide. Positions 20–44 (LFQEKRPMKKIDFLSKGKTDAEKQQ) are excised as a propeptide. Intrachain disulfides connect Cys48-Cys62, Cys55-Cys66, and Cys61-Cys70. Residue Glu56 is modified to 4-carboxyglutamate. Pro58 is subject to 4-hydroxyproline. At Ser71 the chain carries Serine amide.

The protein belongs to the conotoxin O2 superfamily. In terms of processing, brominated at one of the Trp residues. Expressed by the venom duct.

It localises to the secreted. This chain is Conotoxin Gla(2)-TxVI/A, found in Conus textile (Cloth-of-gold cone).